Consider the following 404-residue polypeptide: Glucose-1-phosphate adenylyltransferase (404 aa).

Alpha-D-glucose 1-phosphate contacts are provided by residues Tyr99, Gly164, 179 to 180 (EK), and Ser197.

This sequence belongs to the bacterial/plant glucose-1-phosphate adenylyltransferase family.

It catalyses the reaction alpha-D-glucose 1-phosphate + ATP + H(+) = ADP-alpha-D-glucose + diphosphate. Its pathway is capsule biogenesis; capsule polysaccharide biosynthesis. It functions in the pathway glycan biosynthesis; glycogen biosynthesis. In terms of biological role, involved in the biosynthesis of ADP-glucose, a building block, required in the biosynthesis of maltose-1-phosphate (M1P) and in the elongation reactions to produce linear alpha-1,4-glucans. Catalyzes the reaction between ATP and alpha-D-glucose 1-phosphate (G1P) to produce pyrophosphate and ADP-Glc. In Mycobacteroides abscessus (strain ATCC 19977 / DSM 44196 / CCUG 20993 / CIP 104536 / JCM 13569 / NCTC 13031 / TMC 1543 / L948) (Mycobacterium abscessus), this protein is Glucose-1-phosphate adenylyltransferase.